A 332-amino-acid chain; its full sequence is Adenosine receptor A2b (332 aa).

The Extracellular segment spans residues 1–8 (MQLETQDA). The chain crosses the membrane as a helical span at residues 9–33 (LYVALELVIAALAVAGNVLVCAAVG). The Cytoplasmic segment spans residues 34–43 (ASSALQTPTN). A helical membrane pass occupies residues 44–67 (YFLVSLATADVAVGLFAIPFAITI). Residues 68 to 78 (SLGFCTDFHGC) are Extracellular-facing. Cys-78 and Cys-171 form a disulfide bridge. Residues 79–101 (LFLACFVLVLTQSSIFSLLAVAV) traverse the membrane as a helical segment. At 102–121 (DRYLAIRVPLRYKGLVTGTR) the chain is on the cytoplasmic side. The chain crosses the membrane as a helical span at residues 122–144 (ARGIIAVLWVLAFGIGLTPFLGW). Residues 145–178 (NSKDSATSNCTELGDGIANKSCCPVTCLFENVVP) are Extracellular-facing. Asn-153 and Asn-163 each carry an N-linked (GlcNAc...) asparagine glycan. Residue Glu-174 participates in adenosine binding. The helical transmembrane segment at 179–203 (MSYMVYFNFFGCVLPPLLIMLVIYI) threads the bilayer. Residues 204–235 (KIFMVACKQLQRMELMDHSRTTLQREIHAAKS) are Cytoplasmic-facing. The chain crosses the membrane as a helical span at residues 236 to 259 (LAMIVGIFALCWLPVHAINCITLF). Asn-254 contributes to the adenosine binding site. At 260–267 (HPALAKDK) the chain is on the extracellular side. A helical membrane pass occupies residues 268-291 (PKWVMNVAILLSHANSVVNPIVYA). Positions 279 and 280 each coordinate adenosine. At 292–332 (YRNRDFRYSFHKIISRYVLCQAETKGGSGQAGAQSTLSLGL) the chain is on the cytoplasmic side. Residue Cys-311 is the site of S-palmitoyl cysteine attachment.

It belongs to the G-protein coupled receptor 1 family.

It is found in the cell membrane. In terms of biological role, receptor for adenosine. The activity of this receptor is mediated by G proteins which activate adenylyl cyclase. In Mus musculus (Mouse), this protein is Adenosine receptor A2b (Adora2b).